The sequence spans 665 residues: Putative phospholipid:diacylglycerol acyltransferase 2 (665 aa).

A helical membrane pass occupies residues 48–68 (LIGYLCTAWWLLLFLYHSVPV). S237 acts as the Acyl-ester intermediate in catalysis. Residues D567 and H620 each act as charge relay system in the active site.

The protein belongs to the AB hydrolase superfamily. Lipase family.

It localises to the membrane. It catalyses the reaction a glycerophospholipid + a 1,2-diacyl-sn-glycerol = a monoacylglycerophospholipid + a triacyl-sn-glycerol. The polypeptide is Putative phospholipid:diacylglycerol acyltransferase 2 (PDAT2) (Arabidopsis thaliana (Mouse-ear cress)).